Here is a 547-residue protein sequence, read N- to C-terminus: uncharacterized protein (547 aa).

It to B.pertussis prn N-terminal region.

This is an uncharacterized protein from Escherichia coli O157:H7.